The following is a 354-amino-acid chain: MTELKNDRYLRALLRQPVDVTPVWMMRQAGRYLPEYKATRAQAGDFMSLCKNAELACEVTLQPLRRYPLDAAILFSDILTVPDAMGLGLYFEAGEGPRFTSPVTCKADVDKLPIPDPEDELGYVMNAVRTIRRELKGEVPLIGFSGSPWTLATYMVEGGSSKAFTVIKKMMYADPQALHALLDKLAKSVTLYLNAQIKAGAQAVMIFDTWGGVLTGRDYQQFSLYYMHKIVDGLLRENDGRRVPVTLFTKGGGQWLEAMAETGCDALGLDWTTDIADARRRVGNKVALQGNMDPSMLYAPPARIEEEVATILAGFGHGEGHVFNLGHGIHQDVLPEHAGVFVEAVHRLSEQYHR.

Substrate-binding positions include 27–31 (RQAGR), Asp77, Tyr154, Thr209, and His327.

Belongs to the uroporphyrinogen decarboxylase family. Homodimer.

It is found in the cytoplasm. It catalyses the reaction uroporphyrinogen III + 4 H(+) = coproporphyrinogen III + 4 CO2. It functions in the pathway porphyrin-containing compound metabolism; protoporphyrin-IX biosynthesis; coproporphyrinogen-III from 5-aminolevulinate: step 4/4. Its function is as follows. Catalyzes the decarboxylation of four acetate groups of uroporphyrinogen-III to yield coproporphyrinogen-III. The sequence is that of Uroporphyrinogen decarboxylase from Escherichia coli O6:K15:H31 (strain 536 / UPEC).